A 395-amino-acid chain; its full sequence is Flagellin D (395 aa).

This sequence belongs to the bacterial flagellin family.

The protein resides in the secreted. Its subcellular location is the bacterial flagellum. Its function is as follows. Flagellin is the subunit protein which polymerizes to form the filaments of bacterial flagella. The sequence is that of Flagellin D (flaD) from Rhizobium meliloti (Ensifer meliloti).